A 188-amino-acid chain; its full sequence is Methylated-DNA--protein-cysteine methyltransferase (188 aa).

Residues tyrosine 120, glycine 121, and arginine 134 each coordinate DNA. Cysteine 151 (nucleophile; methyl group acceptor) is an active-site residue. Serine 157 is a DNA binding site.

It belongs to the MGMT family.

The protein localises to the nucleus. The catalysed reaction is a 6-O-methyl-2'-deoxyguanosine in DNA + L-cysteinyl-[protein] = S-methyl-L-cysteinyl-[protein] + a 2'-deoxyguanosine in DNA. It carries out the reaction a 4-O-methyl-thymidine in DNA + L-cysteinyl-[protein] = a thymidine in DNA + S-methyl-L-cysteinyl-[protein]. Functionally, involved in the cellular defense against the biological effects of O6-methylguanine (O6-MeG) and O4-methylthymine (O4-MeT) in DNA. Repairs the methylated nucleobase in DNA by stoichiometrically transferring the methyl group to a cysteine residue in the enzyme. This is a suicide reaction: the enzyme is irreversibly inactivated. Prefers double-stranded DNA over single-stranded DNA as substrate. This Saccharomyces cerevisiae (strain ATCC 204508 / S288c) (Baker's yeast) protein is Methylated-DNA--protein-cysteine methyltransferase (MGT1).